The chain runs to 366 residues: Ribosomal RNA large subunit methyltransferase M (366 aa).

S-adenosyl-L-methionine-binding positions include serine 188, 221 to 224 (CPGG), aspartate 240, aspartate 260, and aspartate 277. Lysine 306 functions as the Proton acceptor in the catalytic mechanism.

The protein belongs to the class I-like SAM-binding methyltransferase superfamily. RNA methyltransferase RlmE family. RlmM subfamily. In terms of assembly, monomer.

The protein localises to the cytoplasm. It catalyses the reaction cytidine(2498) in 23S rRNA + S-adenosyl-L-methionine = 2'-O-methylcytidine(2498) in 23S rRNA + S-adenosyl-L-homocysteine + H(+). In terms of biological role, catalyzes the 2'-O-methylation at nucleotide C2498 in 23S rRNA. This chain is Ribosomal RNA large subunit methyltransferase M, found in Klebsiella pneumoniae (strain 342).